Here is a 103-residue protein sequence, read N- to C-terminus: Large ribosomal subunit protein eL21 (103 aa).

The protein belongs to the eukaryotic ribosomal protein eL21 family.

This is Large ribosomal subunit protein eL21 from Sulfurisphaera tokodaii (strain DSM 16993 / JCM 10545 / NBRC 100140 / 7) (Sulfolobus tokodaii).